The following is a 179-amino-acid chain: MLMGSIARRYARALFSLAVEQGRVEPWNDALQVLKNAVEGSPDLRDVLSNPVYSKEQRRAIVEKLASALKLEREPANLLFLLGDRNRLAYLAAVVDTFRSLADQHLGRLRARVTSAVPLDASAAQAIADRLSQATKATVLLDRAVDPALLGGVVAQVGSLVYDGSLRTQLEDLRKTLKQ.

Belongs to the ATPase delta chain family. In terms of assembly, F-type ATPases have 2 components, F(1) - the catalytic core - and F(0) - the membrane proton channel. F(1) has five subunits: alpha(3), beta(3), gamma(1), delta(1), epsilon(1). F(0) has three main subunits: a(1), b(2) and c(10-14). The alpha and beta chains form an alternating ring which encloses part of the gamma chain. F(1) is attached to F(0) by a central stalk formed by the gamma and epsilon chains, while a peripheral stalk is formed by the delta and b chains.

It localises to the cell inner membrane. Its function is as follows. F(1)F(0) ATP synthase produces ATP from ADP in the presence of a proton or sodium gradient. F-type ATPases consist of two structural domains, F(1) containing the extramembraneous catalytic core and F(0) containing the membrane proton channel, linked together by a central stalk and a peripheral stalk. During catalysis, ATP synthesis in the catalytic domain of F(1) is coupled via a rotary mechanism of the central stalk subunits to proton translocation. Functionally, this protein is part of the stalk that links CF(0) to CF(1). It either transmits conformational changes from CF(0) to CF(1) or is implicated in proton conduction. The sequence is that of ATP synthase subunit delta from Anaeromyxobacter sp. (strain K).